The following is a 90-amino-acid chain: uncharacterized protein (90 aa).

This is an uncharacterized protein from Mycobacterium tuberculosis (strain ATCC 25618 / H37Rv).